We begin with the raw amino-acid sequence, 280 residues long: Elongation factor Ts (280 aa).

The interval 79-82 (TDFV) is involved in Mg(2+) ion dislocation from EF-Tu.

It belongs to the EF-Ts family.

The protein localises to the cytoplasm. Associates with the EF-Tu.GDP complex and induces the exchange of GDP to GTP. It remains bound to the aminoacyl-tRNA.EF-Tu.GTP complex up to the GTP hydrolysis stage on the ribosome. This Vibrio cholerae serotype O1 (strain ATCC 39541 / Classical Ogawa 395 / O395) protein is Elongation factor Ts.